Reading from the N-terminus, the 618-residue chain is Protein polyglycylase TTLL10 (618 aa).

A disordered region spans residues 1–76 (MGSSQEEGLP…GLLLGDGKPS (76 aa)). The span at 57–74 (ATGPPAALLEGLLLGDGK) shows a compositional bias: low complexity. The region spanning 82-479 (PGPFFYIGGN…TFQKSLRGQK (398 aa)) is the TTL domain. ATP-binding positions include K240, 246 to 247 (QG), 289 to 292 (QRYI), 302 to 304 (KFD), and 345 to 346 (TN). Q246 contributes to the a protein binding site. Positions 425, 438, and 440 each coordinate Mg(2+). The disordered stretch occupies residues 503–618 (LGGSCSLRRR…PATLPAFRDL (116 aa)). Residues 539-557 (PVPPPLAPQRPQLPGPSPD) show a composition bias toward pro residues. Positions 585–594 (AKEEREEPEN) are enriched in basic and acidic residues.

Mg(2+) is required as a cofactor.

The protein localises to the cytoplasm. Its subcellular location is the cytoskeleton. The protein resides in the cell projection. It is found in the cilium. It localises to the cilium axoneme. The catalysed reaction is (glycyl)(n)-glycyl-L-glutamyl-[protein] + glycine + ATP = (glycyl)(n+1)-glycyl-L-glutamyl-[protein] + ADP + phosphate + H(+). In terms of biological role, polyglycylase which modifies both tubulin and non-tubulin proteins, generating polyglycine side chains of variable lengths on the gamma-carboxyl groups of specific glutamate residues of target proteins. Involved in the elongation step rather than the initiation step of the polyglycylation reaction. Polyglycylates alpha-tubulin and beta-tubulin. Polyglycylates non-tubulin proteins such as nucleosome assembly protein NAP1. The chain is Protein polyglycylase TTLL10 (TTLL10) from Macaca fascicularis (Crab-eating macaque).